We begin with the raw amino-acid sequence, 386 residues long: Alanine racemase (386 aa).

Residue Lys-48 is the Proton acceptor; specific for D-alanine of the active site. At Lys-48 the chain carries N6-(pyridoxal phosphate)lysine. Residue Arg-149 coordinates substrate. Residue Tyr-278 is the Proton acceptor; specific for L-alanine of the active site. Met-326 provides a ligand contact to substrate.

This sequence belongs to the alanine racemase family. Pyridoxal 5'-phosphate serves as cofactor.

It catalyses the reaction L-alanine = D-alanine. It participates in amino-acid biosynthesis; D-alanine biosynthesis; D-alanine from L-alanine: step 1/1. In terms of biological role, catalyzes the interconversion of L-alanine and D-alanine. May also act on other amino acids. The polypeptide is Alanine racemase (alr) (Nostoc sp. (strain PCC 7120 / SAG 25.82 / UTEX 2576)).